Here is a 341-residue protein sequence, read N- to C-terminus: L-threonine 3-dehydrogenase (341 aa).

C38 contributes to the Zn(2+) binding site. Residues T40 and H43 each act as charge relay system in the active site. Positions 63, 64, 93, 96, 99, and 107 each coordinate Zn(2+). Residues I175, D195, R200, 262-264 (LGI), and 286-287 (IY) contribute to the NAD(+) site.

The protein belongs to the zinc-containing alcohol dehydrogenase family. Homotetramer. Requires Zn(2+) as cofactor.

Its subcellular location is the cytoplasm. It carries out the reaction L-threonine + NAD(+) = (2S)-2-amino-3-oxobutanoate + NADH + H(+). Its pathway is amino-acid degradation; L-threonine degradation via oxydo-reductase pathway; glycine from L-threonine: step 1/2. In terms of biological role, catalyzes the NAD(+)-dependent oxidation of L-threonine to 2-amino-3-ketobutyrate. The sequence is that of L-threonine 3-dehydrogenase from Klebsiella pneumoniae subsp. pneumoniae (strain ATCC 700721 / MGH 78578).